We begin with the raw amino-acid sequence, 690 residues long: Proprotein convertase subtilisin/kexin type 9 (690 aa).

Positions 1 to 28 are cleaved as a signal peptide; the sequence is MGTVSSRRLWWPLPLLLLLLLGPTGTRA. The propeptide occupies 29 to 150; it reads QEEDDDDYEE…IEEDSSVFAQ (122 aa). Tyr-36 is modified (sulfotyrosine). Ser-45 carries the phosphoserine modification. The Inhibitor I9 domain occupies 75–147; the sequence is TYVVVLKEET…VDYIEEDSSV (73 aa). In terms of domain architecture, Peptidase S8 spans 153–459; the sequence is PWNLERITPA…GWQLFCRTVW (307 aa). Catalysis depends on charge relay system residues Asp-184 and His-224. 2 disulfide bridges follow: Cys-221–Cys-253 and Cys-321–Cys-356. The active-site Charge relay system is Ser-384. A C-terminal domain region spans residues 448–690; that stretch reads GAGWQLFCRT…HLAQASQELQ (243 aa). 3 disulfides stabilise this stretch: Cys-455/Cys-525, Cys-475/Cys-524, and Cys-484/Cys-507. An N-linked (GlcNAc...) asparagine glycan is attached at Asn-531. Intrachain disulfides connect Cys-532-Cys-599, Cys-550-Cys-598, Cys-560-Cys-586, Cys-606-Cys-677, Cys-624-Cys-676, and Cys-633-Cys-652. Ser-686 carries the post-translational modification Phosphoserine.

The protein belongs to the peptidase S8 family. As to quaternary structure, monomer. Can self-associate to form dimers and higher multimers which may have increased LDLR degrading activity. The precursor protein but not the mature protein may form multimers. Interacts with APOB, VLDLR, LRP8/APOER2 and BACE1. The full-length immature form (pro-PCSK9) interacts with SCNN1A, SCNN1B and SCNN1G. The pro-PCSK9 form (via C-terminal domain) interacts with LDLR. Interacts (via the C-terminal domain) with ANXA2 (via repeat Annexin 1); the interaction inhibits the degradation of LDLR. Ca(2+) is required as a cofactor. In terms of processing, cleavage by furin and PCSK5 generates a truncated inactive protein that is unable to induce LDLR degradation. Undergoes autocatalytic cleavage in the endoplasmic reticulum to release the propeptide from the N-terminus and the cleavage of the propeptide is strictly required for its maturation and activation. The cleaved propeptide however remains associated with the catalytic domain through non-covalent interactions, preventing potential substrates from accessing its active site. As a result, it is secreted from cells as a propeptide-containing, enzymatically inactive protein. Post-translationally, phosphorylation protects the propeptide against proteolysis.

Its subcellular location is the cytoplasm. The protein resides in the secreted. The protein localises to the endosome. It localises to the lysosome. It is found in the cell surface. Its subcellular location is the endoplasmic reticulum. The protein resides in the golgi apparatus. With respect to regulation, its proteolytic activity is autoinhibited by the non-covalent binding of the propeptide to the catalytic domain. Inhibited by EGTA. Functionally, crucial player in the regulation of plasma cholesterol homeostasis. Binds to low-density lipid receptor family members: low density lipoprotein receptor (LDLR), very low density lipoprotein receptor (VLDLR), apolipoprotein E receptor (LRP1/APOER) and apolipoprotein receptor 2 (LRP8/APOER2), and promotes their degradation in intracellular acidic compartments. Acts via a non-proteolytic mechanism to enhance the degradation of the hepatic LDLR through a clathrin LDLRAP1/ARH-mediated pathway. May prevent the recycling of LDLR from endosomes to the cell surface or direct it to lysosomes for degradation. Can induce ubiquitination of LDLR leading to its subsequent degradation. Inhibits intracellular degradation of APOB via the autophagosome/lysosome pathway in a LDLR-independent manner. Involved in the disposal of non-acetylated intermediates of BACE1 in the early secretory pathway. Inhibits epithelial Na(+) channel (ENaC)-mediated Na(+) absorption by reducing ENaC surface expression primarily by increasing its proteasomal degradation. Regulates neuronal apoptosis via modulation of LRP8/APOER2 levels and related anti-apoptotic signaling pathways. The chain is Proprotein convertase subtilisin/kexin type 9 (PCSK9) from Callithrix jacchus (White-tufted-ear marmoset).